Consider the following 132-residue polypeptide: Small ribosomal subunit protein uS8 (132 aa).

The protein belongs to the universal ribosomal protein uS8 family. As to quaternary structure, part of the 30S ribosomal subunit. Contacts proteins S5 and S12.

One of the primary rRNA binding proteins, it binds directly to 16S rRNA central domain where it helps coordinate assembly of the platform of the 30S subunit. The protein is Small ribosomal subunit protein uS8 of Rhizobium meliloti (strain 1021) (Ensifer meliloti).